A 395-amino-acid chain; its full sequence is MISLRSISRSPAVQPARIYRTLATADTSGINEQAKPKTKRKKTVFSDSLNKGPSFEDFVNGKAADMLVDPLEAARQDPNQRLPKWLKVPIPKGKSFNNLKNDVRELKLATVCEEAKCPNIGECWGGKKSEATATIMLMGDTCTRGCRFCSVKTSRAPAKPDPMEPENTAEAISRWGLGYVVLTTVDRDDLVDGGANHLAETVRKIKEKAPQILVEVLGGDFRGDLDMAAILARSGLDVYAHNIETVEALTPYVRDRRATYRQSLSILNKAKETKPSLVTKTSLMLGFGETDEQIMQTLKDLREIKCDVVTFGQYMRPTKRHMKVVDYVKPEKFDYWRDTALQMGFLYVASGPLVRSSYKAGEAFIENVIRKRRHNVGETPRLAQEVNPKIISQSI.

The transit peptide at 1-14 directs the protein to the mitochondrion; the sequence is MISLRSISRSPAVQ. [4Fe-4S] cluster is bound by residues C112, C117, C123, C142, C146, C149, and S357. Residues 127–346 enclose the Radical SAM core domain; the sequence is KKSEATATIM…RDTALQMGFL (220 aa).

Belongs to the radical SAM superfamily. Lipoyl synthase family. [4Fe-4S] cluster serves as cofactor.

Its subcellular location is the mitochondrion. The enzyme catalyses [[Fe-S] cluster scaffold protein carrying a second [4Fe-4S](2+) cluster] + N(6)-octanoyl-L-lysyl-[protein] + 2 oxidized [2Fe-2S]-[ferredoxin] + 2 S-adenosyl-L-methionine + 4 H(+) = [[Fe-S] cluster scaffold protein] + N(6)-[(R)-dihydrolipoyl]-L-lysyl-[protein] + 4 Fe(3+) + 2 hydrogen sulfide + 2 5'-deoxyadenosine + 2 L-methionine + 2 reduced [2Fe-2S]-[ferredoxin]. It functions in the pathway protein modification; protein lipoylation via endogenous pathway; protein N(6)-(lipoyl)lysine from octanoyl-[acyl-carrier-protein]: step 2/2. In terms of biological role, catalyzes the radical-mediated insertion of two sulfur atoms into the C-6 and C-8 positions of the octanoyl moiety bound to the lipoyl domains of lipoate-dependent enzymes, thereby converting the octanoylated domains into lipoylated derivatives. The protein is Lipoyl synthase, mitochondrial of Debaryomyces hansenii (strain ATCC 36239 / CBS 767 / BCRC 21394 / JCM 1990 / NBRC 0083 / IGC 2968) (Yeast).